The following is an 871-amino-acid chain: MPEFSDKQIQSHTPMMQQYLRIKAEHADMLLFYRMGDFYELFFEDAKRSAQLLDISLTARGQSNGEPIPMAGVPYHAVENYLARLVNMGESVAICEQIGDPATSKGPVERKVVRIVTPGTVTDESLLAEKRQNLLVAICPLNPKQPEAEYAISSLELSSGRFWLTKAHSSEQLAAEMQRLEPAELLYPESISLAGLPLAKAKCKRRPAWEFEQQTAFMLLTRQFGTQHLEGFGIKNNEPTLAAAGAILHYVKETQRAALPHIQALITEHPQDAIILDAATRRNLELQQSMGEGDTHLSAVLDKTVSAMGSRQFQRWLQRPIRNHQELNQRYDAVDALKENLNFENIQLTLKQLADIERIVARVGLRSARPKDFARLRDSLAKIPEVRASLSHRSLSYLHDIIEPFPEVVDLLTKAVIEQPPLLIRDGGVIAEGYDKELDELRDLATGATDYLKQLEQRERERSGIATLKVGYNRVHGYFIEVSRQSSEAVPDDYQRRQTLKNTERYIIPELKEHEDKVLNAQARSLAREKWLYDQLFEHLLPQVTALQKSASGLAQLDTLCCFARLADNYRYCRPQLQKETSLIELEAARHPVIEQLSDEPFIANPMSLTPQQRMLMITGPNMGGKSTYMRQAALIVILAHMGCYVPADKAIIGDIDRIFTRIGASDDLASGRSTFMVEMTETANILHNATAKSLVLMDEIGRGTSTYDGLSLAWSCADYLSRQLQCLTLFATHYFELTELAEELPATVNVHVDAKEHGDTIAFLHKVSPGAASQSFGLQVAKLAGVPEHVIHKAKQKLSELEHTHHGGLNEPKQATMELTPPPEAIPSHTEKRNPLLDELEQLDINDLTPKQALDILYQWQQKQKGSTQS.

620 to 627 lines the ATP pocket; it reads GPNMGGKS. A disordered region spans residues 806–837; it reads HHGGLNEPKQATMELTPPPEAIPSHTEKRNPL.

Belongs to the DNA mismatch repair MutS family.

Functionally, this protein is involved in the repair of mismatches in DNA. It is possible that it carries out the mismatch recognition step. This protein has a weak ATPase activity. This chain is DNA mismatch repair protein MutS, found in Idiomarina loihiensis (strain ATCC BAA-735 / DSM 15497 / L2-TR).